Reading from the N-terminus, the 156-residue chain is Small ribosomal subunit protein uS7c (156 aa).

The protein belongs to the universal ribosomal protein uS7 family. In terms of assembly, part of the 30S ribosomal subunit.

The protein localises to the plastid. It is found in the chloroplast. In terms of biological role, one of the primary rRNA binding proteins, it binds directly to 16S rRNA where it nucleates assembly of the head domain of the 30S subunit. This Bowenia serrulata (Byfield fern) protein is Small ribosomal subunit protein uS7c (rps7).